A 315-amino-acid chain; its full sequence is Transaldolase (315 aa).

Lysine 131 serves as the catalytic Schiff-base intermediate with substrate.

This sequence belongs to the transaldolase family. Type 1 subfamily. Homodimer.

It is found in the cytoplasm. The catalysed reaction is D-sedoheptulose 7-phosphate + D-glyceraldehyde 3-phosphate = D-erythrose 4-phosphate + beta-D-fructose 6-phosphate. The protein operates within carbohydrate degradation; pentose phosphate pathway; D-glyceraldehyde 3-phosphate and beta-D-fructose 6-phosphate from D-ribose 5-phosphate and D-xylulose 5-phosphate (non-oxidative stage): step 2/3. Transaldolase is important for the balance of metabolites in the pentose-phosphate pathway. In Actinobacillus pleuropneumoniae serotype 5b (strain L20), this protein is Transaldolase.